A 68-amino-acid chain; its full sequence is Large ribosomal subunit protein uL29 (68 aa).

The segment at 32 to 68 (QDQLKRRTGSLDNPAERTQHRRDLARVLTVLTQKTKA) is disordered. The segment covering 45-56 (PAERTQHRRDLA) has biased composition (basic and acidic residues).

This sequence belongs to the universal ribosomal protein uL29 family.

The protein is Large ribosomal subunit protein uL29 of Myxococcus xanthus (strain DK1622).